A 123-amino-acid chain; its full sequence is Small ribosomal subunit protein uS12 (123 aa).

Residues 1–28 (MPTIQQLIRKPRQPKVKRSKSQHLESCP) are disordered. The segment covering 9–21 (RKPRQPKVKRSKS) has biased composition (basic residues). D89 is subject to 3-methylthioaspartic acid.

It belongs to the universal ribosomal protein uS12 family. Part of the 30S ribosomal subunit. Contacts proteins S8 and S17. May interact with IF1 in the 30S initiation complex.

With S4 and S5 plays an important role in translational accuracy. Functionally, interacts with and stabilizes bases of the 16S rRNA that are involved in tRNA selection in the A site and with the mRNA backbone. Located at the interface of the 30S and 50S subunits, it traverses the body of the 30S subunit contacting proteins on the other side and probably holding the rRNA structure together. The combined cluster of proteins S8, S12 and S17 appears to hold together the shoulder and platform of the 30S subunit. The protein is Small ribosomal subunit protein uS12 of Dinoroseobacter shibae (strain DSM 16493 / NCIMB 14021 / DFL 12).